The chain runs to 124 residues: Protein CYSTEINE-RICH TRANSMEMBRANE MODULE 10 (124 aa).

Residues 1–103 (MSYQDPQHPV…PKNKKDKKDS (103 aa)) form a disordered region. Composition is skewed to pro residues over residues 27–40 (AGYPPPAGYPPPQY) and 65–88 (GYPPPQYPQGHPPQYPYQGPPPPH). Residues 101-118 (KDSGGFMEGCLAMLCCCV) form a helical membrane-spanning segment.

The protein belongs to the CYSTM1 family. Heterodimers. Interacts with CYSTM7 and WIH1/CYSTM13. As to expression, mostly expressed in stems and,at low levels, in stems, roots, flowers, siliques and leaves.

It is found in the cell membrane. The protein localises to the cytoplasm. Its function is as follows. Involved in resistance to abiotic stress. The protein is Protein CYSTEINE-RICH TRANSMEMBRANE MODULE 10 of Arabidopsis thaliana (Mouse-ear cress).